The primary structure comprises 150 residues: Macrodomain Ter protein (150 aa).

The protein belongs to the MatP family. As to quaternary structure, homodimer.

The protein resides in the cytoplasm. Functionally, required for spatial organization of the terminus region of the chromosome (Ter macrodomain) during the cell cycle. Prevents early segregation of duplicated Ter macrodomains during cell division. Binds specifically to matS, which is a 13 bp signature motif repeated within the Ter macrodomain. This chain is Macrodomain Ter protein, found in Escherichia coli O6:K15:H31 (strain 536 / UPEC).